Consider the following 187-residue polypeptide: MSGGGTETPVACEAAQGGGGKKRDSLGTAGAAHLIIKDLGEIHSRLLDHRPVTQGEIRYFVKEFEEKRGLRELRVLENLKNMIQETNERMLPKCRETMQGGLEETLQRLQAATDSIHRLQQREQERKKVINDHLTASEKQRMLQWEEFLRGQPQRRAEVDAEHRKAMERLREQYAAMEKDLAKFSTF.

The segment at 1 to 27 (MSGGGTETPVACEAAQGGGGKKRDSLG) is disordered. An N-acetylserine modification is found at S2.

Belongs to the BLOC1S5 family. Octamer composed of one copy each BLOC1S1, BLOC1S2, BLOC1S3, BLOC1S4, BLOC1S5, BLOC1S6, DTNBP1/BLOC1S7 and SNAPIN/BLOC1S8. The BLOC-1 complex associates with the AP-3 protein complex and membrane protein cargos. Interacts with BLOC1S4, BLOC1S6, DTNBP1/BLOC1S7 and PI4K2A. Component of the biogenesis of lysosome-related organelles complex 1 (BLOC-1) composed of BLOC1S1, BLOC1S2, BLOC1S3, BLOC1S4, BLOC1S5, BLOC1S6, DTNBP1/BLOC1S7 and SNAPIN/BLOC1S8.

Functionally, component of the BLOC-1 complex, a complex that is required for normal biogenesis of lysosome-related organelles (LRO), such as platelet dense granules and melanosomes. In concert with the AP-3 complex, the BLOC-1 complex is required to target membrane protein cargos into vesicles assembled at cell bodies for delivery into neurites and nerve terminals. The BLOC-1 complex, in association with SNARE proteins, is also proposed to be involved in neurite extension. Plays a role in intracellular vesicle trafficking. This chain is Biogenesis of lysosome-related organelles complex 1 subunit 5 (Bloc1s5), found in Rattus norvegicus (Rat).